A 301-amino-acid polypeptide reads, in one-letter code: tRNA pseudouridine synthase B (301 aa).

Aspartate 48 functions as the Nucleophile in the catalytic mechanism.

The protein belongs to the pseudouridine synthase TruB family. Type 1 subfamily.

The enzyme catalyses uridine(55) in tRNA = pseudouridine(55) in tRNA. Functionally, responsible for synthesis of pseudouridine from uracil-55 in the psi GC loop of transfer RNAs. This is tRNA pseudouridine synthase B from Mycobacterium ulcerans (strain Agy99).